The sequence spans 282 residues: Acetylglutamate kinase (282 aa).

Substrate-binding positions include 62-63 (GG), Arg-84, and Asn-178.

The protein belongs to the acetylglutamate kinase family. ArgB subfamily.

The protein resides in the cytoplasm. The enzyme catalyses N-acetyl-L-glutamate + ATP = N-acetyl-L-glutamyl 5-phosphate + ADP. It participates in amino-acid biosynthesis; L-arginine biosynthesis; N(2)-acetyl-L-ornithine from L-glutamate: step 2/4. Functionally, catalyzes the ATP-dependent phosphorylation of N-acetyl-L-glutamate. The chain is Acetylglutamate kinase from Thermotoga neapolitana (strain ATCC 49049 / DSM 4359 / NBRC 107923 / NS-E).